A 147-amino-acid polypeptide reads, in one-letter code: Large ribosomal subunit protein uL15 (147 aa).

The segment at 1–62 is disordered; sequence MDLSNLRPAI…GQMPLQRRLP (62 aa). Gly residues-rich tracts occupy residues 21-31 and 42-52; these read RGPGSGNGKTA and SGGGVKPGFEG.

This sequence belongs to the universal ribosomal protein uL15 family. In terms of assembly, part of the 50S ribosomal subunit.

Its function is as follows. Binds to the 23S rRNA. The protein is Large ribosomal subunit protein uL15 of Syntrophotalea carbinolica (strain DSM 2380 / NBRC 103641 / GraBd1) (Pelobacter carbinolicus).